The primary structure comprises 186 residues: Photosystem I assembly protein Ycf4 (186 aa).

2 consecutive transmembrane segments (helical) span residues 26-46 (WATI…SSYF) and 66-86 (IVMT…WLTI).

The protein belongs to the Ycf4 family.

It is found in the plastid. Its subcellular location is the chloroplast thylakoid membrane. Functionally, seems to be required for the assembly of the photosystem I complex. This is Photosystem I assembly protein Ycf4 from Pyropia yezoensis (Susabi-nori).